The chain runs to 269 residues: 4-hydroxy-tetrahydrodipicolinate reductase (269 aa).

NAD(+)-binding positions include 9–14, Asp-35, 102–104, and 128–131; these read GCAGKM, GTT, and APNF. Residue His-158 is the Proton donor/acceptor of the active site. His-159 is a (S)-2,3,4,5-tetrahydrodipicolinate binding site. Residue Lys-162 is the Proton donor of the active site. (S)-2,3,4,5-tetrahydrodipicolinate is bound at residue 168-169; that stretch reads GT.

Belongs to the DapB family.

The protein localises to the cytoplasm. It carries out the reaction (S)-2,3,4,5-tetrahydrodipicolinate + NAD(+) + H2O = (2S,4S)-4-hydroxy-2,3,4,5-tetrahydrodipicolinate + NADH + H(+). The catalysed reaction is (S)-2,3,4,5-tetrahydrodipicolinate + NADP(+) + H2O = (2S,4S)-4-hydroxy-2,3,4,5-tetrahydrodipicolinate + NADPH + H(+). It functions in the pathway amino-acid biosynthesis; L-lysine biosynthesis via DAP pathway; (S)-tetrahydrodipicolinate from L-aspartate: step 4/4. Functionally, catalyzes the conversion of 4-hydroxy-tetrahydrodipicolinate (HTPA) to tetrahydrodipicolinate. In Gloeobacter violaceus (strain ATCC 29082 / PCC 7421), this protein is 4-hydroxy-tetrahydrodipicolinate reductase.